The primary structure comprises 147 residues: uncharacterized protein (147 aa).

This sequence belongs to the RTX toxin acyltransferase family.

This is an uncharacterized protein from Synechocystis sp. (strain ATCC 27184 / PCC 6803 / Kazusa).